The following is a 295-amino-acid chain: 4-hydroxy-tetrahydrodipicolinate synthase (295 aa).

Position 47 (Thr-47) interacts with pyruvate. Tyr-135 (proton donor/acceptor) is an active-site residue. Lys-163 acts as the Schiff-base intermediate with substrate in catalysis. Ile-206 provides a ligand contact to pyruvate.

Belongs to the DapA family. Homodimer.

It is found in the cytoplasm. It carries out the reaction L-aspartate 4-semialdehyde + pyruvate = (2S,4S)-4-hydroxy-2,3,4,5-tetrahydrodipicolinate + H2O + H(+). It functions in the pathway amino-acid biosynthesis; L-lysine biosynthesis via DAP pathway; (S)-tetrahydrodipicolinate from L-aspartate: step 3/4. Is not feedback inhibited by lysine. In terms of biological role, catalyzes the condensation of (S)-aspartate-beta-semialdehyde [(S)-ASA] and pyruvate to 4-hydroxy-tetrahydrodipicolinate (HTPA). The protein is 4-hydroxy-tetrahydrodipicolinate synthase of Staphylococcus aureus (strain COL).